A 167-amino-acid polypeptide reads, in one-letter code: Leptin (167 aa).

The signal sequence occupies residues 1 to 21 (MCWRPLCRFLWLWSYLSYVQA). Cys117 and Cys167 form a disulfide bridge.

Belongs to the leptin family.

Its subcellular location is the secreted. Key player in the regulation of energy balance and body weight control. Once released into the circulation, has central and peripheral effects by binding LEPR, found in many tissues, which results in the activation of several major signaling pathways. In the hypothalamus, acts as an appetite-regulating factor that induces a decrease in food intake and an increase in energy consumption by inducing anorexinogenic factors and suppressing orexigenic neuropeptides, also regulates bone mass and secretion of hypothalamo-pituitary-adrenal hormones. In the periphery, increases basal metabolism, influences reproductive function, regulates pancreatic beta-cell function and insulin secretion, is pro-angiogenic for endothelial cell and affects innate and adaptive immunity. In the arcuate nucleus of the hypothalamus, activates by depolarization POMC neurons inducing FOS and SOCS3 expression to release anorexigenic peptides and inhibits by hyperpolarization NPY neurons inducing SOCS3 with a consequent reduction on release of orexigenic peptides. In addition to its known satiety inducing effect, has a modulatory role in nutrient absorption. In the intestine, reduces glucose absorption by enterocytes by activating PKC and leading to a sequential activation of p38, PI3K and ERK signaling pathways which exerts an inhibitory effect on glucose absorption. Acts as a growth factor on certain tissues, through the activation of different signaling pathways increases expression of genes involved in cell cycle regulation such as CCND1, via JAK2-STAT3 pathway, or VEGFA, via MAPK1/3 and PI3K-AKT1 pathways. May also play an apoptotic role via JAK2-STAT3 pathway and up-regulation of BIRC5 expression. Pro-angiogenic, has mitogenic activity on vascular endothelial cells and plays a role in matrix remodeling by regulating the expression of matrix metalloproteinases (MMPs) and tissue inhibitors of metalloproteinases (TIMPs). In innate immunity, modulates the activity and function of neutrophils by increasing chemotaxis and the secretion of oxygen radicals. Increases phagocytosis by macrophages and enhances secretion of pro-inflammatory mediators. Increases cytotoxic ability of NK cells. Plays a pro-inflammatory role, in synergy with IL1B, by inducing NOS2 which promotes the production of IL6, IL8 and Prostaglandin E2, through a signaling pathway that involves JAK2, PI3K, MAP2K1/MEK1 and MAPK14/p38. In adaptive immunity, promotes the switch of memory T-cells towards T helper-1 cell immune responses. Increases CD4(+)CD25(-) T cells proliferation and reduces autophagy during TCR (T cell receptor) stimulation, through MTOR signaling pathway activation and BCL2 up-regulation. The sequence is that of Leptin (Lep) from Mus musculus (Mouse).